The chain runs to 145 residues: Large ribosomal subunit protein uL16 (145 aa).

Over residues 1–21 (MLVPTRVKHRKQHRGRMHGKA) the composition is skewed to basic residues. The tract at residues 1–22 (MLVPTRVKHRKQHRGRMHGKAT) is disordered.

The protein belongs to the universal ribosomal protein uL16 family. In terms of assembly, part of the 50S ribosomal subunit.

In terms of biological role, binds 23S rRNA and is also seen to make contacts with the A and possibly P site tRNAs. The protein is Large ribosomal subunit protein uL16 of Desulfitobacterium hafniense (strain Y51).